Consider the following 126-residue polypeptide: Glycine cleavage system H protein (126 aa).

A Lipoyl-binding domain is found at 24-105 (TLTVGITDHA…AYGVWLFKLK (82 aa)). K65 is subject to N6-lipoyllysine.

It belongs to the GcvH family. The glycine cleavage system is composed of four proteins: P, T, L and H. (R)-lipoate serves as cofactor.

The glycine cleavage system catalyzes the degradation of glycine. The H protein shuttles the methylamine group of glycine from the P protein to the T protein. This Burkholderia vietnamiensis (strain G4 / LMG 22486) (Burkholderia cepacia (strain R1808)) protein is Glycine cleavage system H protein.